Here is an 88-residue protein sequence, read N- to C-terminus: MYILEISLKFTPMPVSVQRKEAEAAQAAYQQVVEALRSGQPSVLELHCEFQAEKKLAVLTSGIASVQLYEKSGGSATVKRPGFAVIGE.

Belongs to the UPF0367 family.

This Synechococcus sp. (strain ATCC 27144 / PCC 6301 / SAUG 1402/1) (Anacystis nidulans) protein is UPF0367 protein syc2447_c.